The primary structure comprises 95 residues: Opiscorpine-3 (95 aa).

A signal peptide spans 1–19; the sequence is MNNKLTALIFLGLLAIASC. A BetaSPN-type CS-alpha/beta domain is found at 55–95; the sequence is EFMCVANVDMTKSCDTHCQKASGEKGYCHGTKCKCGVPLSY. Disulfide bonds link C58–C82, C68–C87, and C72–C89.

This sequence belongs to the long chain scorpion toxin family. Class 3 subfamily. In terms of tissue distribution, expressed by the venom gland.

Its subcellular location is the secreted. Its function is as follows. Has antimicrobial activity against yeasts and bacteria. The polypeptide is Opiscorpine-3 (Opistophthalmus carinatus (African yellow leg scorpion)).